Here is a 122-residue protein sequence, read N- to C-terminus: Ribosome-binding factor A (122 aa).

Belongs to the RbfA family. As to quaternary structure, monomer. Binds 30S ribosomal subunits, but not 50S ribosomal subunits or 70S ribosomes.

It is found in the cytoplasm. In terms of biological role, one of several proteins that assist in the late maturation steps of the functional core of the 30S ribosomal subunit. Associates with free 30S ribosomal subunits (but not with 30S subunits that are part of 70S ribosomes or polysomes). Required for efficient processing of 16S rRNA. May interact with the 5'-terminal helix region of 16S rRNA. This Albidiferax ferrireducens (strain ATCC BAA-621 / DSM 15236 / T118) (Rhodoferax ferrireducens) protein is Ribosome-binding factor A.